The following is a 185-amino-acid chain: MGRCLRNHSITYKTPKVPYERERFDAELKLVGQFGLKNKKEIQRVHYMLGHMRTIAKVMLMKDAKDPKRLLEGAALLRRLHNLGILPRDQNKLEFVLALKEENLLERRLQTLVYRKGFAKSIHHARVLIRGKMIKVGKQVVDVPSFLVRVESEPLIQLADNTPLTNPEINGRRKRKNNHAGKEDN.

Residues 107-179 (RRLQTLVYRK…NGRRKRKNNH (73 aa)) form the S4 RNA-binding domain. The tract at residues 161-185 (NTPLTNPEINGRRKRKNNHAGKEDN) is disordered.

This sequence belongs to the universal ribosomal protein uS4 family.

The protein is Small ribosomal subunit protein uS4 of Entamoeba histolytica (strain ATCC 30459 / HM-1:IMSS / ABRM).